A 435-amino-acid chain; its full sequence is NADH-quinone oxidoreductase subunit D (435 aa).

Belongs to the complex I 49 kDa subunit family. As to quaternary structure, NDH-1 is composed of 14 different subunits. Subunits NuoB, C, D, E, F, and G constitute the peripheral sector of the complex.

Its subcellular location is the cell inner membrane. It carries out the reaction a quinone + NADH + 5 H(+)(in) = a quinol + NAD(+) + 4 H(+)(out). Its function is as follows. NDH-1 shuttles electrons from NADH, via FMN and iron-sulfur (Fe-S) centers, to quinones in the respiratory chain. The immediate electron acceptor for the enzyme in this species is believed to be ubiquinone. Couples the redox reaction to proton translocation (for every two electrons transferred, four hydrogen ions are translocated across the cytoplasmic membrane), and thus conserves the redox energy in a proton gradient. The chain is NADH-quinone oxidoreductase subunit D from Xanthomonas oryzae pv. oryzae (strain MAFF 311018).